The chain runs to 374 residues: Type IV secretion system protein PtlG homolog (374 aa).

A helical transmembrane segment spans residues 38–56 (WMFALVAVALSCLLATGIW). The tract at residues 86 to 117 (HPREPEPAPLPDMPAAPDPILPQPRPAPPVPP) is disordered. Pro residues predominate over residues 92-117 (PAPLPDMPAAPDPILPQPRPAPPVPP).

Belongs to the TrbI/VirB10 family.

It localises to the cell membrane. This Bordetella bronchiseptica (strain ATCC BAA-588 / NCTC 13252 / RB50) (Alcaligenes bronchisepticus) protein is Type IV secretion system protein PtlG homolog (ptlG).